The chain runs to 331 residues: Rho GTPase-activating protein 5 (331 aa).

The CRIB domain maps to 3 to 16; it reads IGGPTNIRHVAHVT. One can recognise a Rho-GAP domain in the interval 48 to 225; that stretch reads VSTESMQLSY…LLKSLTEKTV (178 aa). Over residues 227 to 251 the composition is skewed to basic and acidic residues; it reads EREASSSVVDRRCSKEAEDGEKEKD. Positions 227–331 are disordered; it reads EREASSSVVD…VQPPICSSNP (105 aa). Residues 252 to 277 are compositionally biased toward acidic residues; sequence NEEEEEDEEEEEEEEDEDEDEEEEGD.

Expressed in differentiating xylem cells.

Its subcellular location is the cell membrane. In terms of biological role, acts as a GTPase activator for the Rac-type GTPase by converting it to an inactive GDP-bound state. This Arabidopsis thaliana (Mouse-ear cress) protein is Rho GTPase-activating protein 5 (ROPGAP5).